We begin with the raw amino-acid sequence, 1557 residues long: ABC transporter atnG (1557 aa).

A run of 5 helical transmembrane segments spans residues 27-47, 70-90, 99-119, 131-151, and 159-179; these read FTLYFEEAFLSIFPAATLILA, LKLLLLAPYSISQLLLLAFWM, LTIASTVLRFIATLPCGYLIH, IISIYFLLTLLFDIPLARTIW, and VSAIFIAGTVVKALLLILETW. N-linked (GlcNAc...) asparagine glycans are attached at residues asparagine 202 and asparagine 249. The next 6 membrane-spanning stretches (helical) occupy residues 256–276, 311–331, 385–405, 412–432, 490–510, and 531–551; these read AGAMVVPIAKAFKWDLLAGVF, ATLLIGAYALVYGGIAIATAT, YIHDTWASLIEIGIALYLLYN, IAPIIIAFGCTVTAMKIAMMA, LLIAVVGLSNFNTLMTPIVSF, and LTSLTLFNLFAVFIGTLVESI. The ABC transmembrane type-1 1 domain maps to 279-556; that stretch reads LCQSGFIISQ…LVESISETAM (278 aa). Residues 593–829 form the ABC transporter 1 domain; it reads AFEVDVGWKN…LDYIQGFAIA (237 aa). 625–632 contributes to the ATP binding site; it reads GAVGCGKT. N-linked (GlcNAc...) asparagine glycosylation is present at asparagine 667. Residues 882 to 902 form a helical membrane-spanning segment; the sequence is LVYFGLMAIFVFLQAFPTVWV. One can recognise an ABC transmembrane type-1 2 domain in the interval 882–1162; sequence LVYFGLMAIF…LITDWTVLET (281 aa). Asparagine 916 carries N-linked (GlcNAc...) asparagine glycosylation. 4 helical membrane-spanning segments follow: residues 921–941, 996–1016, 1020–1040, and 1105–1125; these read IGVYWMFGVLGACFLLATACF, AVLQTCLALFLCVAQLIIIAV, YITATIPLCVLVYCIIGTFYM, and LSLVLDMTVAGFVLVLMGIAV. N-linked (GlcNAc...) asparagine glycosylation occurs at asparagine 1132. A helical transmembrane segment spans residues 1135–1155; the sequence is SLGLALVNVVSLSASVKALIT. Residues 1199-1431 form the ABC transporter 2 domain; that stretch reads VEYKNVSAFY…PSVFRELYKS (233 aa). Asparagine 1203 and asparagine 1218 each carry an N-linked (GlcNAc...) asparagine glycan. 1233–1240 provides a ligand contact to ATP; it reads GRSGSGKS. Disordered regions lie at residues 1439 to 1464 and 1503 to 1557; these read ERQERAEAEARRRERVEKERAEEELR and RTRS…RGLH. Over residues 1507–1522 the composition is skewed to basic and acidic residues; the sequence is RSRDHSAERRESKRYS.

It belongs to the ABC transporter superfamily. ABCC family. Conjugate transporter (TC 3.A.1.208) subfamily.

It is found in the cell membrane. In terms of biological role, ABC transporter; part of the gene cluster that mediates the biosynthesis of aspercryptins, linear lipopeptides built from six amino acids including 2 highly unusual and nonproteogenic amino acids, 2-amino-octanoic acid (2aoa) and 2-amino-dodecanol (2adol). This chain is ABC transporter atnG, found in Emericella nidulans (strain FGSC A4 / ATCC 38163 / CBS 112.46 / NRRL 194 / M139) (Aspergillus nidulans).